A 336-amino-acid chain; its full sequence is Aldo-keto reductase str7 (336 aa).

Residue aspartate 57 coordinates NADP(+). Tyrosine 62 serves as the catalytic Proton donor. A substrate-binding site is contributed by histidine 124. NADP(+) contacts are provided by residues serine 154–glutamate 155, glutamine 174, serine 206–proline 220, and lysine 283–asparagine 291.

The protein belongs to the aldo/keto reductase family. Aldo/keto reductase 2 subfamily.

The protein operates within mycotoxin biosynthesis. Functionally, aldo-keto reductase; part of the gene cluster that mediates the biosynthesis of strobilurin A, an antifungal polyketide that contains a key beta-methoxyacrylate toxophore that targets the complex III of the mitochondrial electron transport chain. Strobilurin biosynthesis begins with construction of benzoyl CoA by step-wise elimination of ammonia from phenylalanine by the phenylalanine ammonia-lyase str11, oxygenation by str8 and retro-Claisen reaction to form benzoic acid, which is activated to its CoA thiolester benzoyl CoA by the dedicated CoA ligase str10. Benzoyl CoA forms the starter unit for the highly reducing polyketide synthase stpks1 that produces the polyketide prestrobilutin A. The FAD-dependent oxygenase str9 then catalyzes the key oxidative rearrangement responsible for the creation of the beta-methoxyacrylate toxophore. Str9 performs epoxidation of the 2,3 olefin of prestrobilutin A, followed by Meinwald rearrangement to furnish the aldehyde intermediate. Rapid enolization of the aldehyde intermediate would give the beta-methoxyacrylate skeleton and methylations catalyzed by str2 and str3 complete the synthesis and lead to the production of strobilurin A. The short-chain dehydrogenase stl2 and the dehydrogenase str4 play a role in the shunt pathway leading to the production of bolineol. The cluster encodes no obvious halogenase gene that could be involved in production of strobilurin B, nor any obvious dimethylallyl-transferase that could be involved in the production of strobilurin G. It is possible that unknown proteins encoded in, or near, the cluster (such as str1 or stl1) may form new classes of halogenases or dimethylally-transferases, or that the responsible genes are located elsewhere on the genome. Similarly, proteins encoded by str5/str6 hydrolases appear to have no chemical role in the biosynthesis of strobilurin A. Finally, no obvious self-resistance gene is found within the cluster. In Strobilurus tenacellus, this protein is Aldo-keto reductase str7.